A 234-amino-acid polypeptide reads, in one-letter code: Adenosine 5'-phosphosulfate reductase (234 aa).

Residues Cys120, Cys121, Cys203, and Cys206 each coordinate [4Fe-4S] cluster. Cys229 serves as the catalytic Nucleophile; cysteine thiosulfonate intermediate.

This sequence belongs to the PAPS reductase family. CysH subfamily. The cofactor is [4Fe-4S] cluster.

The protein localises to the cytoplasm. The catalysed reaction is [thioredoxin]-disulfide + sulfite + AMP + 2 H(+) = adenosine 5'-phosphosulfate + [thioredoxin]-dithiol. It functions in the pathway sulfur metabolism; hydrogen sulfide biosynthesis; sulfite from sulfate. In terms of biological role, catalyzes the formation of sulfite from adenosine 5'-phosphosulfate (APS) using thioredoxin as an electron donor. In Bacillus mycoides (strain KBAB4) (Bacillus weihenstephanensis), this protein is Adenosine 5'-phosphosulfate reductase.